The chain runs to 264 residues: uncharacterized protein (264 aa).

A helical membrane pass occupies residues 182–198 (TVTGVSNALGFIIAALL).

It to E.coli YjiC.

It is found in the membrane. This is an uncharacterized protein from Escherichia coli (strain K12).